A 336-amino-acid polypeptide reads, in one-letter code: Ferrochelatase (336 aa).

Positions 206 and 287 each coordinate Fe cation.

It belongs to the ferrochelatase family.

The protein localises to the cytoplasm. The enzyme catalyses heme b + 2 H(+) = protoporphyrin IX + Fe(2+). Its pathway is porphyrin-containing compound metabolism; protoheme biosynthesis; protoheme from protoporphyrin-IX: step 1/1. Functionally, catalyzes the ferrous insertion into protoporphyrin IX. The protein is Ferrochelatase of Neisseria meningitidis serogroup B (strain ATCC BAA-335 / MC58).